A 252-amino-acid chain; its full sequence is Imidazole glycerol phosphate synthase subunit HisF (252 aa).

Residues Asp11 and Asp130 contribute to the active site.

It belongs to the HisA/HisF family. As to quaternary structure, heterodimer of HisH and HisF.

It is found in the cytoplasm. The catalysed reaction is 5-[(5-phospho-1-deoxy-D-ribulos-1-ylimino)methylamino]-1-(5-phospho-beta-D-ribosyl)imidazole-4-carboxamide + L-glutamine = D-erythro-1-(imidazol-4-yl)glycerol 3-phosphate + 5-amino-1-(5-phospho-beta-D-ribosyl)imidazole-4-carboxamide + L-glutamate + H(+). Its pathway is amino-acid biosynthesis; L-histidine biosynthesis; L-histidine from 5-phospho-alpha-D-ribose 1-diphosphate: step 5/9. Functionally, IGPS catalyzes the conversion of PRFAR and glutamine to IGP, AICAR and glutamate. The HisF subunit catalyzes the cyclization activity that produces IGP and AICAR from PRFAR using the ammonia provided by the HisH subunit. In Staphylococcus aureus (strain Mu3 / ATCC 700698), this protein is Imidazole glycerol phosphate synthase subunit HisF.